Consider the following 344-residue polypeptide: MNVIGIESSCDDTAIAIVNSNREIIANVVISQYTEHLPYSGVVPEIAARAHLKNLQYAMKETLNQAKINFTDIDVIAATSGPGLIGGVIVGSVFGQAIACALGKDFIAVNHLEGHILAVRLNENISFPYLVLLVSGGHCQFIAVLGVGKYKILGQTIDDAVGEAFDKTARLLKLGYPGGPIIEKLASKGDPHKYSLPLSMTKKSGCDLSFSGLKTAVKQLIFSIESLSEKVICDICASFQYTVVQILLCRSINAIKLFESYCSNNFKINRKNYFVISGGVAANQYLRQEIFNLASTYGYCGVAPPSNLCTDNAAMIAWAGIERLNANLFSSNFVPRAKWSVEEL.

Fe cation is bound by residues histidine 111 and histidine 115. Substrate is bound by residues 133 to 137, aspartate 166, glycine 179, and asparagine 283; that span reads LVSGG. Aspartate 311 lines the Fe cation pocket.

It belongs to the KAE1 / TsaD family. The cofactor is Fe(2+).

Its subcellular location is the cytoplasm. The catalysed reaction is L-threonylcarbamoyladenylate + adenosine(37) in tRNA = N(6)-L-threonylcarbamoyladenosine(37) in tRNA + AMP + H(+). In terms of biological role, required for the formation of a threonylcarbamoyl group on adenosine at position 37 (t(6)A37) in tRNAs that read codons beginning with adenine. Is involved in the transfer of the threonylcarbamoyl moiety of threonylcarbamoyl-AMP (TC-AMP) to the N6 group of A37, together with TsaE and TsaB. TsaD likely plays a direct catalytic role in this reaction. The sequence is that of tRNA N6-adenosine threonylcarbamoyltransferase from Orientia tsutsugamushi (strain Ikeda) (Rickettsia tsutsugamushi).